The chain runs to 120 residues: Accessory gland protein Acp53Ea (120 aa).

Positions 1–23 (MKLIKVTLVFSLLALVFVAQTEA) are cleaved as a signal peptide.

Main cells of accessory gland and seminal fluid.

Its subcellular location is the secreted. Responsible for physiological and behavioral changes in mated female flies. This is Accessory gland protein Acp53Ea (Acp53Ea) from Drosophila melanogaster (Fruit fly).